Consider the following 141-residue polypeptide: Large ribosomal subunit protein uL16c (141 aa).

Belongs to the universal ribosomal protein uL16 family. As to quaternary structure, part of the 50S ribosomal subunit.

It is found in the plastid. Its subcellular location is the chloroplast. This Zygnema circumcarinatum (Green alga) protein is Large ribosomal subunit protein uL16c.